Reading from the N-terminus, the 279-residue chain is 2-dehydro-3-deoxyphosphooctonate aldolase (279 aa).

The protein belongs to the KdsA family.

Its subcellular location is the cytoplasm. The catalysed reaction is D-arabinose 5-phosphate + phosphoenolpyruvate + H2O = 3-deoxy-alpha-D-manno-2-octulosonate-8-phosphate + phosphate. It functions in the pathway carbohydrate biosynthesis; 3-deoxy-D-manno-octulosonate biosynthesis; 3-deoxy-D-manno-octulosonate from D-ribulose 5-phosphate: step 2/3. The protein operates within bacterial outer membrane biogenesis; lipopolysaccharide biosynthesis. The polypeptide is 2-dehydro-3-deoxyphosphooctonate aldolase (Azoarcus sp. (strain BH72)).